A 536-amino-acid polypeptide reads, in one-letter code: Chorismate synthase (536 aa).

Residue His17 is part of the active site. The disordered stretch occupies residues 37 to 59 (EDVQPQLNRRRPGQGPLSTQRRE). His104 is a catalytic residue. Positions 344 to 377 (ERDGCSAATLSRERASDGRTTSRHEEEVERGRER) are disordered. Residues 354 to 377 (SRERASDGRTTSRHEEEVERGRER) show a composition bias toward basic and acidic residues. The active site involves Asp489.

The protein belongs to the chorismate synthase family. FMNH2 is required as a cofactor.

The catalysed reaction is 5-O-(1-carboxyvinyl)-3-phosphoshikimate = chorismate + phosphate. It catalyses the reaction FMNH2 + NADP(+) = FMN + NADPH + 2 H(+). Its pathway is metabolic intermediate biosynthesis; chorismate biosynthesis; chorismate from D-erythrose 4-phosphate and phosphoenolpyruvate: step 7/7. Functionally, bifunctional chorismate synthase and flavin reductase. Catalyzes the conversion of 5-enolpyruvylshikimate 3-phosphate (EPSP) to form chorismate. Acts also as a flavin reductase (FR) able to generate reduced flavin mononucleotide in the presence of NADPH. In Toxoplasma gondii, this protein is Chorismate synthase (AROC).